Consider the following 213-residue polypeptide: Probable anti-sigma-F factor NrsF (213 aa).

The next 6 membrane-spanning stretches (helical) occupy residues 27-47 (ALAIGWGAAGATLLMLALLQV), 51-71 (LGLALLLPMFWVKVGFVTCLA), 91-111 (VPAALGLPVLGMWAIAAFTLI), 126-146 (TWKSCPLLIAMLSVPVFAAVL), 159-179 (LAGFAAGLLAGAVAAVVYCLH), and 187-207 (FIGFWYLLGMLIPAAVGVLLG).

Belongs to the NrsF anti-sigma-F factor family.

The protein resides in the cell inner membrane. Its function is as follows. Probably an anti-sigma factor for extracytoplasmic function (ECF) sigma factor sigma-F (SigF), which responds to (hypo)chlorite. ECF sigma factors are held in an inactive form by a cognate anti-sigma factor. This Azospira oryzae (strain ATCC BAA-33 / DSM 13638 / PS) (Dechlorosoma suillum) protein is Probable anti-sigma-F factor NrsF.